A 364-amino-acid polypeptide reads, in one-letter code: Dihydroorotate dehydrogenase (quinone) (364 aa).

FMN is bound by residues 61–65 and threonine 85; that span reads AGYDK. Lysine 65 contributes to the substrate binding site. 110–114 is a binding site for substrate; it reads NRLGF. The FMN site is built by asparagine 139 and asparagine 170. Asparagine 170 contributes to the substrate binding site. Serine 173 serves as the catalytic Nucleophile. Asparagine 175 lines the substrate pocket. Positions 215 and 243 each coordinate FMN. A substrate-binding site is contributed by 244–245; the sequence is NT. FMN contacts are provided by residues glycine 266, glycine 295, and 316 to 317; that span reads YS.

This sequence belongs to the dihydroorotate dehydrogenase family. Type 2 subfamily. In terms of assembly, monomer. FMN is required as a cofactor.

It is found in the cell membrane. The catalysed reaction is (S)-dihydroorotate + a quinone = orotate + a quinol. It participates in pyrimidine metabolism; UMP biosynthesis via de novo pathway; orotate from (S)-dihydroorotate (quinone route): step 1/1. Catalyzes the conversion of dihydroorotate to orotate with quinone as electron acceptor. The polypeptide is Dihydroorotate dehydrogenase (quinone) (Brucella melitensis biotype 2 (strain ATCC 23457)).